Consider the following 165-residue polypeptide: 6,7-dimethyl-8-ribityllumazine synthase (165 aa).

Residues tyrosine 30, 61 to 63 (ALE), and 90 to 92 (VVI) each bind 5-amino-6-(D-ribitylamino)uracil. 95–96 (ET) is a binding site for (2S)-2-hydroxy-3-oxobutyl phosphate. The active-site Proton donor is the histidine 98. Residue asparagine 123 coordinates 5-amino-6-(D-ribitylamino)uracil. (2S)-2-hydroxy-3-oxobutyl phosphate is bound at residue arginine 137.

It belongs to the DMRL synthase family.

It carries out the reaction (2S)-2-hydroxy-3-oxobutyl phosphate + 5-amino-6-(D-ribitylamino)uracil = 6,7-dimethyl-8-(1-D-ribityl)lumazine + phosphate + 2 H2O + H(+). Its pathway is cofactor biosynthesis; riboflavin biosynthesis; riboflavin from 2-hydroxy-3-oxobutyl phosphate and 5-amino-6-(D-ribitylamino)uracil: step 1/2. Catalyzes the formation of 6,7-dimethyl-8-ribityllumazine by condensation of 5-amino-6-(D-ribitylamino)uracil with 3,4-dihydroxy-2-butanone 4-phosphate. This is the penultimate step in the biosynthesis of riboflavin. The polypeptide is 6,7-dimethyl-8-ribityllumazine synthase (Xanthobacter autotrophicus (strain ATCC BAA-1158 / Py2)).